A 241-amino-acid chain; its full sequence is Leucyl/phenylalanyl-tRNA--protein transferase (241 aa).

The protein belongs to the L/F-transferase family.

The protein resides in the cytoplasm. The catalysed reaction is N-terminal L-lysyl-[protein] + L-leucyl-tRNA(Leu) = N-terminal L-leucyl-L-lysyl-[protein] + tRNA(Leu) + H(+). It carries out the reaction N-terminal L-arginyl-[protein] + L-leucyl-tRNA(Leu) = N-terminal L-leucyl-L-arginyl-[protein] + tRNA(Leu) + H(+). It catalyses the reaction L-phenylalanyl-tRNA(Phe) + an N-terminal L-alpha-aminoacyl-[protein] = an N-terminal L-phenylalanyl-L-alpha-aminoacyl-[protein] + tRNA(Phe). In terms of biological role, functions in the N-end rule pathway of protein degradation where it conjugates Leu, Phe and, less efficiently, Met from aminoacyl-tRNAs to the N-termini of proteins containing an N-terminal arginine or lysine. This is Leucyl/phenylalanyl-tRNA--protein transferase from Neisseria meningitidis serogroup B (strain ATCC BAA-335 / MC58).